Consider the following 248-residue polypeptide: Pyridoxine 5'-phosphate synthase (248 aa).

Residue N10 coordinates 3-amino-2-oxopropyl phosphate. 12–13 (DH) lines the 1-deoxy-D-xylulose 5-phosphate pocket. A 3-amino-2-oxopropyl phosphate-binding site is contributed by R21. H46 (proton acceptor) is an active-site residue. Residues R48 and H53 each coordinate 1-deoxy-D-xylulose 5-phosphate. E73 serves as the catalytic Proton acceptor. Residue T103 participates in 1-deoxy-D-xylulose 5-phosphate binding. H194 serves as the catalytic Proton donor. 3-amino-2-oxopropyl phosphate contacts are provided by residues G195 and 216–217 (GH).

Belongs to the PNP synthase family. Homooctamer; tetramer of dimers.

It is found in the cytoplasm. The catalysed reaction is 3-amino-2-oxopropyl phosphate + 1-deoxy-D-xylulose 5-phosphate = pyridoxine 5'-phosphate + phosphate + 2 H2O + H(+). It participates in cofactor biosynthesis; pyridoxine 5'-phosphate biosynthesis; pyridoxine 5'-phosphate from D-erythrose 4-phosphate: step 5/5. In terms of biological role, catalyzes the complicated ring closure reaction between the two acyclic compounds 1-deoxy-D-xylulose-5-phosphate (DXP) and 3-amino-2-oxopropyl phosphate (1-amino-acetone-3-phosphate or AAP) to form pyridoxine 5'-phosphate (PNP) and inorganic phosphate. This chain is Pyridoxine 5'-phosphate synthase, found in Legionella pneumophila (strain Lens).